A 90-amino-acid chain; its full sequence is Conotoxin Vc22.1 (90 aa).

Positions 1 to 18 (MMTRVFLAMFFLLVLTKG) are cleaved as a signal peptide.

The protein belongs to the E superfamily. Contains 4 disulfide bonds. Expressed by the venom duct.

It localises to the secreted. In Conus victoriae (Queen Victoria cone), this protein is Conotoxin Vc22.1.